We begin with the raw amino-acid sequence, 191 residues long: Xanthine phosphoribosyltransferase (191 aa).

Xanthine-binding residues include L20 and N27. Position 128–132 (128–132 (ANGQA)) interacts with 5-phospho-alpha-D-ribose 1-diphosphate. K156 is a binding site for xanthine.

It belongs to the purine/pyrimidine phosphoribosyltransferase family. Xpt subfamily. Homodimer.

It is found in the cytoplasm. It carries out the reaction XMP + diphosphate = xanthine + 5-phospho-alpha-D-ribose 1-diphosphate. The protein operates within purine metabolism; XMP biosynthesis via salvage pathway; XMP from xanthine: step 1/1. Functionally, converts the preformed base xanthine, a product of nucleic acid breakdown, to xanthosine 5'-monophosphate (XMP), so it can be reused for RNA or DNA synthesis. The chain is Xanthine phosphoribosyltransferase from Levilactobacillus brevis (strain ATCC 367 / BCRC 12310 / CIP 105137 / JCM 1170 / LMG 11437 / NCIMB 947 / NCTC 947) (Lactobacillus brevis).